Here is a 318-residue protein sequence, read N- to C-terminus: Ribonuclease Z (318 aa).

7 residues coordinate Zn(2+): His62, His64, Asp66, His67, His140, Asp211, and His269. Asp66 serves as the catalytic Proton acceptor.

It belongs to the RNase Z family. In terms of assembly, homodimer. Zn(2+) serves as cofactor.

The catalysed reaction is Endonucleolytic cleavage of RNA, removing extra 3' nucleotides from tRNA precursor, generating 3' termini of tRNAs. A 3'-hydroxy group is left at the tRNA terminus and a 5'-phosphoryl group is left at the trailer molecule.. Its function is as follows. Zinc phosphodiesterase, which displays some tRNA 3'-processing endonuclease activity. Probably involved in tRNA maturation, by removing a 3'-trailer from precursor tRNA. This chain is Ribonuclease Z, found in Brevibacillus brevis (strain 47 / JCM 6285 / NBRC 100599).